We begin with the raw amino-acid sequence, 502 residues long: Glycerol kinase (502 aa).

Position 15 (T15) interacts with ADP. Positions 15, 16, and 17 each coordinate ATP. Position 15 (T15) interacts with sn-glycerol 3-phosphate. R19 lines the ADP pocket. Sn-glycerol 3-phosphate contacts are provided by R85, E86, and Y137. R85, E86, and Y137 together coordinate glycerol. H233 is subject to Phosphohistidine; by HPr. Residue D247 coordinates sn-glycerol 3-phosphate. Glycerol-binding residues include D247 and Q248. 2 residues coordinate ADP: T269 and G312. Residues T269, G312, Q316, and G413 each contribute to the ATP site. Positions 413 and 417 each coordinate ADP.

This sequence belongs to the FGGY kinase family. As to quaternary structure, homotetramer and homodimer (in equilibrium). In terms of processing, the phosphoenolpyruvate-dependent sugar phosphotransferase system (PTS), including enzyme I, and histidine-containing protein (HPr) are required for the phosphorylation, which leads to the activation of the enzyme.

The enzyme catalyses glycerol + ATP = sn-glycerol 3-phosphate + ADP + H(+). It functions in the pathway polyol metabolism; glycerol degradation via glycerol kinase pathway; sn-glycerol 3-phosphate from glycerol: step 1/1. With respect to regulation, activated by phosphorylation and inhibited by fructose 1,6-bisphosphate (FBP). Its function is as follows. Key enzyme in the regulation of glycerol uptake and metabolism. Catalyzes the phosphorylation of glycerol to yield sn-glycerol 3-phosphate. This chain is Glycerol kinase, found in Streptococcus agalactiae serotype Ia (strain ATCC 27591 / A909 / CDC SS700).